Here is a 236-residue protein sequence, read N- to C-terminus: Chloride intracellular channel protein 3 (236 aa).

The tract at residues 1 to 88 (MAETKLQLFV…EDFLEETLGP (88 aa)) is required for insertion into the membrane. In terms of domain architecture, GST N-terminal spans 12–90 (ASEDGESVGH…FLEETLGPPD (79 aa)). Positions 22–25 (CPSC) match the G-site motif. A disulfide bridge links Cys-22 with Cys-25. A helical transmembrane segment spans residues 24 to 44 (SCQRLFMVLLLKGVPFTLTTV). A phosphoserine mark is found at Ser-49 and Ser-159. Residues 68-235 (DSDAKTDTLQ…LAAYRPAVHP (168 aa)) form the GST C-terminal domain.

This sequence belongs to the chloride channel CLIC family. In terms of assembly, associated with the C-terminal of MAPK15. In terms of tissue distribution, detected in placenta (at protein level). Widely expressed. High expression is found in placenta followed by lung and heart. Low expression in skeletal muscle, kidney and pancreas.

It is found in the nucleus. The protein resides in the membrane. The protein localises to the cell membrane. Its subcellular location is the cytoplasm. It localises to the secreted. It is found in the extracellular space. The protein resides in the extracellular matrix. The enzyme catalyses chloride(in) = chloride(out). Its activity is regulated as follows. Inhibited by rapamycin, amphotericin B and IAA-94. Functionally, in the soluble state, catalyzes glutaredoxin-like thiol disulfide exchange reactions with reduced glutathione as electron donor. Reduced in a glutathione-dependent way and secreted into the extracellular matrix where it activates TGM2 and promotes blood vessel growth during tissue remodeling as occurs in tumorigenesis. Can reduce specific cysteines in TGM2 and regulate cofactor binding. Can insert into membranes and form outwardly rectifying chloride ion channels. May participate in cellular growth control. This is Chloride intracellular channel protein 3 from Homo sapiens (Human).